The chain runs to 389 residues: Mannitol-1-phosphate 5-dehydrogenase (389 aa).

5 to 16 (AIQFGGGNIGRG) lines the NAD(+) pocket. Lys-214 is an active-site residue.

Belongs to the mannitol dehydrogenase family. Monomer.

It carries out the reaction D-mannitol 1-phosphate + NAD(+) = beta-D-fructose 6-phosphate + NADH + H(+). In terms of biological role, catalyzes the NAD(H)-dependent interconversion of D-fructose 6-phosphate and D-mannitol 1-phosphate in the mannitol metabolic pathway. The sequence is that of Mannitol-1-phosphate 5-dehydrogenase from Talaromyces marneffei (strain ATCC 18224 / CBS 334.59 / QM 7333) (Penicillium marneffei).